A 62-amino-acid chain; its full sequence is Photosystem II reaction center protein Z (62 aa).

The next 2 helical transmembrane spans lie at 8 to 28 (ALFAFIVVSFLLVVGVPVVLA) and 41 to 61 (FSGIGIWFLLVFLVGILNSFV).

Belongs to the PsbZ family. As to quaternary structure, PSII is composed of 1 copy each of membrane proteins PsbA, PsbB, PsbC, PsbD, PsbE, PsbF, PsbH, PsbI, PsbJ, PsbK, PsbL, PsbM, PsbT, PsbY, PsbZ, Psb30/Ycf12, at least 3 peripheral proteins of the oxygen-evolving complex and a large number of cofactors. It forms dimeric complexes.

It localises to the plastid. The protein localises to the chloroplast thylakoid membrane. May control the interaction of photosystem II (PSII) cores with the light-harvesting antenna, regulates electron flow through the 2 photosystem reaction centers. PSII is a light-driven water plastoquinone oxidoreductase, using light energy to abstract electrons from H(2)O, generating a proton gradient subsequently used for ATP formation. This chain is Photosystem II reaction center protein Z, found in Chlorella vulgaris (Green alga).